The primary structure comprises 308 residues: Mycothiol acetyltransferase (308 aa).

Residue E44 participates in 1D-myo-inositol 2-(L-cysteinylamino)-2-deoxy-alpha-D-glucopyranoside binding. 83–85 is a binding site for acetyl-CoA; sequence AVV. Residues 161–308 form the N-acetyltransferase domain; sequence VRLRTYAGSA…DVAYGRPEGD (148 aa). The 1D-myo-inositol 2-(L-cysteinylamino)-2-deoxy-alpha-D-glucopyranoside site is built by E188, K230, and E238. Acetyl-CoA is bound by residues 242 to 244 and 249 to 255; these read VGV and QGRGLGR. Position 276 (Y276) interacts with 1D-myo-inositol 2-(L-cysteinylamino)-2-deoxy-alpha-D-glucopyranoside. Residue 281-286 participates in acetyl-CoA binding; sequence NTAALH.

The protein belongs to the acetyltransferase family. MshD subfamily. As to quaternary structure, monomer.

It carries out the reaction 1D-myo-inositol 2-(L-cysteinylamino)-2-deoxy-alpha-D-glucopyranoside + acetyl-CoA = mycothiol + CoA + H(+). In terms of biological role, catalyzes the transfer of acetyl from acetyl-CoA to desacetylmycothiol (Cys-GlcN-Ins) to form mycothiol. This chain is Mycothiol acetyltransferase, found in Gordonia bronchialis (strain ATCC 25592 / DSM 43247 / BCRC 13721 / JCM 3198 / KCTC 3076 / NBRC 16047 / NCTC 10667) (Rhodococcus bronchialis).